Reading from the N-terminus, the 1075-residue chain is Ataxin-2-like protein (1075 aa).

Methionine 1 carries the post-translational modification N-acetylmethionine. Low complexity predominate over residues 1–12 (MLKPQPLQQPSQ). Residues 1–115 (MLKPQPLQQP…KGPPQSPVFE (115 aa)) are disordered. Residues 98–121 (SARGQSTGKGPPQSPVFEGVYNNS) form an interaction with MPL region. Serine 103 and serine 111 each carry phosphoserine. Tyrosine 118 carries the phosphotyrosine modification. The 78-residue stretch at 122 to 199 (RMLHFLTAVV…VMLVHFRNVD (78 aa)) folds into the Sm domain. Lysine 207 carries the N6-acetyllysine modification. Serine 238 bears the Phosphoserine mark. Tyrosine 264 is modified (phosphotyrosine). At serine 306 the chain carries Phosphoserine. Residue tyrosine 309 is modified to Phosphotyrosine. The segment covering 316–328 (ENDDGRTEEEKHS) has biased composition (basic and acidic residues). Disordered regions lie at residues 316–521 (ENDD…LEPQ), 551–697 (QFKL…SIPV), 733–770 (VSNS…MMQA), 820–849 (SNPR…EQPT), 865–940 (ATQL…SSFP), and 1022–1045 (PYIG…ADDR). The segment covering 330–342 (VQRQGSGRESPSL) has biased composition (polar residues). Phosphoserine is present on residues serine 335 and serine 339. Lysine 348 participates in a covalent cross-link: Glycyl lysine isopeptide (Lys-Gly) (interchain with G-Cter in SUMO2). Position 349 is a phosphotyrosine (tyrosine 349). Asymmetric dimethylarginine is present on arginine 361. Over residues 363-380 (GVRCSSSRGGRPGLSSLP) the composition is skewed to low complexity. 2 positions are modified to phosphoserine: serine 391 and serine 409. Residues 421–433 (TLSSPSNRPSGET) show a composition bias toward polar residues. Position 449 is a phosphoserine (serine 449). Low complexity-rich tracts occupy residues 450 to 462 (PKSA…SASC) and 471 to 485 (VPTS…SSVS). Serine 493 and serine 496 each carry phosphoserine. Residues 505–516 (DVKELSTKEPGR) show a composition bias toward basic and acidic residues. Residues serine 557, serine 558, serine 559, and serine 563 each carry the phosphoserine modification. Residues 571–584 (ILKEEPKGKEKEVD) are compositionally biased toward basic and acidic residues. At serine 594 the chain carries Phosphoserine. Phosphothreonine is present on threonine 632. Phosphoserine is present on residues serine 634, serine 674, serine 680, and serine 684. 2 stretches are compositionally biased toward low complexity: residues 678-694 (STST…STPS) and 761-770 (PASAPPMMQA). Over residues 874 to 898 (QPATTPTGSQPQSQHAAPSPVQHQA) the composition is skewed to polar residues. Composition is skewed to low complexity over residues 931 to 940 (SAQSPQSSFP) and 1025 to 1037 (GHPQ…QAPG).

This sequence belongs to the ataxin-2 family. In terms of assembly, interacts with MPL/TPOR and EPOR and dissociates after ligand stimulation. Interacts with DDX6, G3BP1, and ATXN2. Interacts with PRMT1. Interacts with CIC and ATXN1. In terms of processing, thrombopoietin triggers the phosphorylation on tyrosine residues in a way that is dependent on MPL C-terminal domain. Post-translationally, asymmetrically dimethylated. Probably methylated by PRMT1. In terms of tissue distribution, expressed at high levels in thymus, lymph node, spleen, fetal kidney and adult testis. Constitutively associated with MPL and EPOR in hematopoietic cells.

It is found in the membrane. The protein localises to the cytoplasm. It localises to the nucleus speckle. Its subcellular location is the cytoplasmic granule. Involved in the regulation of stress granule and P-body formation. In Homo sapiens (Human), this protein is Ataxin-2-like protein (ATXN2L).